Here is a 342-residue protein sequence, read N- to C-terminus: Dysbindin (342 aa).

Ser11 carries the phosphoserine modification. Residues 83 to 180 (LSAHWEKKQA…AELDAEHSQK (98 aa)) are a coiled coil. A Nuclear export signal motif is present at residues 243-256 (LMDISDQEALDVFL). Residues 263–342 (NTLLSPISGP…ATLHSDDSDS (80 aa)) are disordered. Residues 286 to 305 (PTPSQAPATPPSSSSPGTDP) show a composition bias toward low complexity. 3 positions are modified to phosphoserine: Ser316, Ser321, and Ser340.

This sequence belongs to the dysbindin family. Interacts (via its coiled coil domain) with KXD1. Interacts with CMYA5, PI4K2 and RNF151. Component of the biogenesis of lysosome-related organelles complex 1 (BLOC-1) composed of at least BLOC1S1, BLOC1S2, BLOC1S3, BLOC1S4, BLOC1S5, BLOC1S6, DTNBP1/BLOC1S7 and SNAPIN/BLOC1S8. Interacts directly in the complex with BLOC1S5, BLOC1S6 and SNAPIN/BLOC1S8. The BLOC-1 complex associates with the AP-3 protein complex and membrane protein cargos. This BLOC-1 complex also associates with the BLOC-2 complex in endosomes. Binds to DTNA and DTNB but may not be a physiological binding partner. Interacts with the DNA-dependent protein kinase complex DNA-PK; the interaction phosphorylates DTNBP1 in vitro. Interacts directly in this complex with XRCC5 and XRCC6. Interacts with AP3M1, AP3B2 and TRIM32. Interacts with XPO1; the interaction exports DTNBP1 out of the nucleus. Ubiquitinated by TRIM32. Ubiquitination leads to DTNBP1 degradation.

It localises to the cytoplasm. It is found in the cytoplasmic vesicle membrane. The protein resides in the cytoplasmic vesicle. Its subcellular location is the secretory vesicle. The protein localises to the synaptic vesicle membrane. It localises to the endosome membrane. It is found in the melanosome membrane. The protein resides in the nucleus. Its subcellular location is the postsynaptic density. The protein localises to the presynaptic cell membrane. It localises to the endoplasmic reticulum. Component of the BLOC-1 complex, a complex that is required for normal biogenesis of lysosome-related organelles (LRO), such as platelet dense granules and melanosomes. In concert with the AP-3 complex, the BLOC-1 complex is required to target membrane protein cargos into vesicles assembled at cell bodies for delivery into neurites and nerve terminals. The BLOC-1 complex, in association with SNARE proteins, is also proposed to be involved in neurite extension. Associates with the BLOC-2 complex to facilitate the transport of TYRP1 independent of AP-3 function. Plays a role in synaptic vesicle trafficking and in neurotransmitter release. Plays a role in the regulation of cell surface exposure of DRD2. May play a role in actin cytoskeleton reorganization and neurite outgrowth. May modulate MAPK8 phosphorylation. Appears to promote neuronal transmission and viability through regulating the expression of SNAP25 and SYN1, modulating PI3-kinase-Akt signaling and influencing glutamatergic release. Regulates the expression of SYN1 through binding to its promoter. Modulates prefrontal cortical activity via the dopamine/D2 pathway. The protein is Dysbindin (DTNBP1) of Bos taurus (Bovine).